Reading from the N-terminus, the 193-residue chain is Acyl carrier protein phosphodiesterase (193 aa).

It belongs to the AcpH family.

The catalysed reaction is holo-[ACP] + H2O = apo-[ACP] + (R)-4'-phosphopantetheine + H(+). Its function is as follows. Converts holo-ACP to apo-ACP by hydrolytic cleavage of the phosphopantetheine prosthetic group from ACP. The chain is Acyl carrier protein phosphodiesterase from Shigella boydii serotype 18 (strain CDC 3083-94 / BS512).